The sequence spans 184 residues: Thymidine kinase (184 aa).

ATP contacts are provided by residues 10–17 (GPMYSGKT) and 83–86 (DEVQ). Glutamate 84 serves as the catalytic Proton acceptor. Residues cysteine 140, cysteine 143, cysteine 173, and cysteine 176 each contribute to the Zn(2+) site.

The protein belongs to the thymidine kinase family. Homotetramer.

It is found in the cytoplasm. The enzyme catalyses thymidine + ATP = dTMP + ADP + H(+). This chain is Thymidine kinase, found in Thermotoga petrophila (strain ATCC BAA-488 / DSM 13995 / JCM 10881 / RKU-1).